The chain runs to 425 residues: Tyrosine--tRNA ligase (425 aa).

Residue Tyr37 participates in L-tyrosine binding. A 'HIGH' region motif is present at residues 42–51; sequence PTADSLHLGH. L-tyrosine is bound by residues Tyr175 and Gln179. The 'KMSKS' region motif lies at 235–239; that stretch reads KFGKT. Residue Lys238 participates in ATP binding. The S4 RNA-binding domain occupies 357-414; that stretch reads ADLQQALVSAELVPSRGQARTMISSNAVTINGEKQANPEYIFSASDRLFDRYTLLRRG.

It belongs to the class-I aminoacyl-tRNA synthetase family. TyrS type 1 subfamily. In terms of assembly, homodimer.

It localises to the cytoplasm. The catalysed reaction is tRNA(Tyr) + L-tyrosine + ATP = L-tyrosyl-tRNA(Tyr) + AMP + diphosphate + H(+). Its function is as follows. Catalyzes the attachment of tyrosine to tRNA(Tyr) in a two-step reaction: tyrosine is first activated by ATP to form Tyr-AMP and then transferred to the acceptor end of tRNA(Tyr). The protein is Tyrosine--tRNA ligase of Pectobacterium atrosepticum (strain SCRI 1043 / ATCC BAA-672) (Erwinia carotovora subsp. atroseptica).